A 158-amino-acid polypeptide reads, in one-letter code: NAD(P)H-quinone oxidoreductase subunit J, chloroplastic (158 aa).

The protein belongs to the complex I 30 kDa subunit family. NDH is composed of at least 16 different subunits, 5 of which are encoded in the nucleus.

Its subcellular location is the plastid. It is found in the chloroplast thylakoid membrane. It catalyses the reaction a plastoquinone + NADH + (n+1) H(+)(in) = a plastoquinol + NAD(+) + n H(+)(out). The catalysed reaction is a plastoquinone + NADPH + (n+1) H(+)(in) = a plastoquinol + NADP(+) + n H(+)(out). Its function is as follows. NDH shuttles electrons from NAD(P)H:plastoquinone, via FMN and iron-sulfur (Fe-S) centers, to quinones in the photosynthetic chain and possibly in a chloroplast respiratory chain. The immediate electron acceptor for the enzyme in this species is believed to be plastoquinone. Couples the redox reaction to proton translocation, and thus conserves the redox energy in a proton gradient. The protein is NAD(P)H-quinone oxidoreductase subunit J, chloroplastic of Daucus carota (Wild carrot).